A 151-amino-acid chain; its full sequence is 3-dehydroquinate dehydratase (151 aa).

Tyrosine 24 serves as the catalytic Proton acceptor. The substrate site is built by asparagine 76, histidine 82, and aspartate 89. Histidine 102 (proton donor) is an active-site residue. Substrate is bound by residues 103–104 (VS) and arginine 113.

This sequence belongs to the type-II 3-dehydroquinase family. As to quaternary structure, homododecamer.

The enzyme catalyses 3-dehydroquinate = 3-dehydroshikimate + H2O. It functions in the pathway metabolic intermediate biosynthesis; chorismate biosynthesis; chorismate from D-erythrose 4-phosphate and phosphoenolpyruvate: step 3/7. In terms of biological role, catalyzes a trans-dehydration via an enolate intermediate. The sequence is that of 3-dehydroquinate dehydratase from Afipia carboxidovorans (strain ATCC 49405 / DSM 1227 / KCTC 32145 / OM5) (Oligotropha carboxidovorans).